Consider the following 375-residue polypeptide: Decapping and exoribonuclease protein Rai1 (375 aa).

Substrate-binding positions include Arg43 and 120-122 (LRG). The Mg(2+) site is built by Glu180, Glu222, Asp224, Glu247, and Leu248. Position 222 (Glu222) interacts with substrate. Substrate is bound by residues Lys249 and Gln274.

The protein belongs to the DXO/Dom3Z family. As to quaternary structure, interacts with Rat1. It depends on Mg(2+) as a cofactor.

It carries out the reaction a 5'-end triphospho-ribonucleoside in mRNA + H2O = a 5'-end phospho-ribonucleoside in mRNA + diphosphate + H(+). It catalyses the reaction a 5'-end NAD(+)-phospho-ribonucleoside in mRNA + H2O = a 5'-end phospho-ribonucleoside in mRNA + NAD(+) + H(+). The enzyme catalyses a 5'-end (N(7)-methyl 5'-triphosphoguanosine)-ribonucleoside-ribonucleotide in mRNA + H2O = a (N(7)-methyl 5'-triphosphoguanosine)-nucleoside + a 5'-end phospho-ribonucleoside in mRNA + H(+). Its function is as follows. Decapping enzyme for NAD-capped RNAs: specifically hydrolyzes the nicotinamide adenine dinucleotide (NAD) cap from a subset of RNAs by removing the entire NAD moiety from the 5'-end of an NAD-capped RNA. The NAD-cap is present at the 5'-end of some RNAs and snoRNAs. In contrast to the canonical 5'-end N7 methylguanosine (m7G) cap, the NAD cap promotes mRNA decay. Also acts as a non-canonical decapping enzyme that removes the entire cap structure of m7G capped or incompletely capped RNAs and mediates their subsequent degradation. Specifically degrades pre-mRNAs with a defective 5'-end m7G cap and is part of a pre-mRNA capping quality control. Possesses 5'-pyrophosphohydrolase activity, hydrolyzing the 5'-end triphosphate to release pyrophosphates, and 5'-3' exonuclease activity. May be involved in RNA degradation in the nucleus. This is Decapping and exoribonuclease protein Rai1 from Drosophila melanogaster (Fruit fly).